Here is a 428-residue protein sequence, read N- to C-terminus: MSAFIVLGAQWGDEGKGKMTDYLAENADVVVRFQGGNNAGHTVVVGEKEYKLHLIPSGILYNDKLNVIGNGVVLDPKALFEEINYLESLGVEITPDRLIISDRAHVIMPYHRILDGIKERARGNKDIGTTGKGIGPSYTDKMERSGIRVCDLIHKEVFEENLKETLEVKNKIITEVFGGEALDYNEIYNEYLGYAEKLRPFVKDISVIVNKKIKDGKEVLFEGAQGTLLDIDYGTYPYVTSSSTIAGGVCIGAGVGPTAITNAVGIAKAYTTRVGKGPFPTELLDRTGDWVREKGHEFGVTTGRARRCGWLDLVILKTSARISGLTSFAVTKIDTLAGLDTLKVCTGYRLNGEIIDYVPASLEDLAKCKPIYEEFQGWDDSIANARCYKDLPENAIKYLKKIEDFTETKVSIVSVGPKRDQTMMISEI.

GTP contacts are provided by residues 12-18 and 40-42; these read GDEGKGK and GHT. The active-site Proton acceptor is the D13. The Mg(2+) site is built by D13 and G40. IMP is bound by residues 13 to 16, 38 to 41, T130, R144, Q225, T240, and R304; these read DEGK and NAGH. H41 functions as the Proton donor in the catalytic mechanism. 300-306 contacts substrate; it reads VTTGRAR. Residues R306, 332-334, and 414-416 each bind GTP; these read KID and SVG.

The protein belongs to the adenylosuccinate synthetase family. As to quaternary structure, homodimer. Requires Mg(2+) as cofactor.

It localises to the cytoplasm. The enzyme catalyses IMP + L-aspartate + GTP = N(6)-(1,2-dicarboxyethyl)-AMP + GDP + phosphate + 2 H(+). The protein operates within purine metabolism; AMP biosynthesis via de novo pathway; AMP from IMP: step 1/2. In terms of biological role, plays an important role in the de novo pathway of purine nucleotide biosynthesis. Catalyzes the first committed step in the biosynthesis of AMP from IMP. The sequence is that of Adenylosuccinate synthetase from Clostridium botulinum (strain Loch Maree / Type A3).